The sequence spans 473 residues: Photosystem II CP43 reaction center protein (473 aa).

A propeptide spanning residues 1–14 (MKTLYSLRRSYPVE) is cleaved from the precursor. Threonine 15 carries the post-translational modification N-acetylthreonine. Threonine 15 bears the Phosphothreonine mark. The next 5 membrane-spanning stretches (helical) occupy residues 69–93 (LFEVAHFVPEKPMYEQGLILLPHLA), 134–155 (LIGPETLEESFPFFGYVWKDKN), 178–200 (KALYFGGLYDTWAPGGGDVRKIT), 255–275 (KPFAWARRAFVWSGEAYLSYS), and 291–312 (WFNNTAYPSEFYGPTGPEASQA). Glutamate 367 contacts [CaMn4O5] cluster. Residues 447–471 (RARAAAAGFEKGIDRDTEPVLFMNP) traverse the membrane as a helical segment.

This sequence belongs to the PsbB/PsbC family. PsbC subfamily. PSII is composed of 1 copy each of membrane proteins PsbA, PsbB, PsbC, PsbD, PsbE, PsbF, PsbH, PsbI, PsbJ, PsbK, PsbL, PsbM, PsbT, PsbX, PsbY, PsbZ, Psb30/Ycf12, at least 3 peripheral proteins of the oxygen-evolving complex and a large number of cofactors. It forms dimeric complexes. Requires Binds multiple chlorophylls and provides some of the ligands for the Ca-4Mn-5O cluster of the oxygen-evolving complex. It may also provide a ligand for a Cl- that is required for oxygen evolution. PSII binds additional chlorophylls, carotenoids and specific lipids. as cofactor.

It localises to the plastid. The protein localises to the chloroplast thylakoid membrane. Its function is as follows. One of the components of the core complex of photosystem II (PSII). It binds chlorophyll and helps catalyze the primary light-induced photochemical processes of PSII. PSII is a light-driven water:plastoquinone oxidoreductase, using light energy to abstract electrons from H(2)O, generating O(2) and a proton gradient subsequently used for ATP formation. The sequence is that of Photosystem II CP43 reaction center protein from Zygnema circumcarinatum (Green alga).